We begin with the raw amino-acid sequence, 92 residues long: Small ribosomal subunit protein uS19 (92 aa).

The protein belongs to the universal ribosomal protein uS19 family.

Its function is as follows. Protein S19 forms a complex with S13 that binds strongly to the 16S ribosomal RNA. This chain is Small ribosomal subunit protein uS19, found in Streptococcus agalactiae serotype Ia (strain ATCC 27591 / A909 / CDC SS700).